Reading from the N-terminus, the 51-residue chain is Insulin (51 aa).

Disulfide bonds link Cys-7/Cys-37, Cys-19/Cys-50, and Cys-36/Cys-41.

Belongs to the insulin family. Heterodimer of a B chain and an A chain linked by two disulfide bonds.

The protein localises to the secreted. Insulin decreases blood glucose concentration. It increases cell permeability to monosaccharides, amino acids and fatty acids. It accelerates glycolysis, the pentose phosphate cycle, and glycogen synthesis in liver. The sequence is that of Insulin (INS) from Meleagris gallopavo (Wild turkey).